A 56-amino-acid chain; its full sequence is Large ribosomal subunit protein bL32 (56 aa).

A compositionally biased stretch (basic residues) spans 1-16 (MAVQKSKKSRAARGMR). Positions 1–22 (MAVQKSKKSRAARGMRRSHDAL) are disordered.

It belongs to the bacterial ribosomal protein bL32 family.

This Photobacterium profundum (strain SS9) protein is Large ribosomal subunit protein bL32.